Reading from the N-terminus, the 623-residue chain is Kelch-like protein diablo (623 aa).

Residues 1–54 (MGDLPGSGSTAQPRDAAVTGTGGNSTAGGGSSVGSTAVDRPPSPARLSHTSEKH) form a disordered region. T19 carries the phosphothreonine modification. Over residues 20–32 (GTGGNSTAGGGSS) the composition is skewed to gly residues. In terms of domain architecture, BTB spans 72–139 (CDVVLNVGGR…CYTAHIMVEE (68 aa)). The BACK domain occupies 174 to 276 (CLGIRAFADT…SPKFLVGTVG (103 aa)). Kelch repeat units follow at residues 323 to 369 (VLFA…VLND), 371 to 417 (LYAV…VLDG), 418 to 464 (FLYA…VLGG), 466 to 511 (LYAI…VFNN), 513 to 558 (IYAV…VVNG), and 559 to 605 (QLYA…VMRA).

It participates in protein modification; protein ubiquitination. Probable substrate-specific adapter of an E3 ubiquitin-protein ligase complex which mediates the ubiquitination and subsequent proteasomal degradation of target proteins. May have a role in synapse differentiation and growth. This chain is Kelch-like protein diablo, found in Drosophila erecta (Fruit fly).